The following is a 277-amino-acid chain: Homeobox protein Nkx-6.2 (277 aa).

Residues 89 to 142 (AGVYFGPAAAVARGYPKPLAELPGRPPIFWPGVVQGAPWRDPRLAGPAPAGGVL) form a repressor domain region. 2 disordered regions span residues 132–155 (LAGPAPAGGVLDKDGKKKHSRPTF) and 210–250 (EMAS…DDEK). Positions 148 to 207 (KKHSRPTFSGQQIFALEKTFEQTKYLAGPERARLAYSLGMTESQVKVWFQNRRTKWRKRH) form a DNA-binding region, homeobox. Residues 216–226 (KKQDSDAEKLK) show a composition bias toward basic and acidic residues.

Highest expression in brain.

The protein resides in the nucleus. Functionally, transcription factor with repressor activity involved in the regulation of axon-glial interactions at myelin paranodes in oligodendrocytes. Binds to the consensus DNA sequence 5'-(A/T)TTAATGA-3'. In oligodendrocytes, binds to MBP and PLP1 promoter regions. The chain is Homeobox protein Nkx-6.2 (NKX6-2) from Homo sapiens (Human).